The primary structure comprises 220 residues: Endonuclease NucS (220 aa).

It belongs to the NucS endonuclease family.

It is found in the cytoplasm. Cleaves both 3' and 5' ssDNA extremities of branched DNA structures. This chain is Endonuclease NucS, found in Frankia alni (strain DSM 45986 / CECT 9034 / ACN14a).